A 223-amino-acid polypeptide reads, in one-letter code: Urease subunit alpha (223 aa).

The tract at residues 1 to 101 is urease gamma; that stretch reads MHFTQQQLQR…LVTIHEPIAN (101 aa). The tract at residues 102–223 is urease beta; sequence DDKIKAGEIF…LSKAKEKGFL (122 aa).

This sequence in the N-terminal section; belongs to the urease gamma subunit family. The protein in the C-terminal section; belongs to the urease beta subunit family. Heterohexamer of 3 UreA (alpha) and 3 UreB (beta) subunits.

The protein resides in the cytoplasm. It catalyses the reaction urea + 2 H2O + H(+) = hydrogencarbonate + 2 NH4(+). It functions in the pathway nitrogen metabolism; urea degradation; CO(2) and NH(3) from urea (urease route): step 1/1. The chain is Urease subunit alpha from Campylobacter lari.